Reading from the N-terminus, the 1168-residue chain is Probable serine/threonine protein kinase IRE (1168 aa).

Disordered stretches follow at residues 1 to 165 and 377 to 444; these read MSTT…GVES and EKQN…KIQP. Positions 16–25 are enriched in low complexity; that stretch reads PTTISTPTST. Basic and acidic residues-rich tracts occupy residues 39-54 and 107-130; these read RHSD…KTDE and QDDK…DARA. Polar residues-rich tracts occupy residues 146-163 and 401-414; these read QWSQ…NPGV and TARS…NFRM. The segment at 488–507 adopts a C2H2-type; atypical zinc-finger fold; the sequence is CRICEVEIPVVHVEEHSRIC. Disordered regions lie at residues 546 to 566, 602 to 622, and 717 to 744; these read PRAV…DLDE, GTKD…PRNS, and SSNA…LNPR. A Protein kinase domain is found at 754–1043; it reads FEIIKPISRG…AGEVKQHHFF (290 aa). ATP-binding positions include 760 to 768 and Lys783; that span reads ISRGAFGRV. Asp877 acts as the Proton acceptor in catalysis. In terms of domain architecture, AGC-kinase C-terminal spans 1044–1144; it reads KDINWDTLAR…KNLSQLASIN (101 aa).

This sequence belongs to the protein kinase superfamily. AGC Ser/Thr protein kinase family. In terms of tissue distribution, highly expressed in roots, elongating root hair cells and pollen grains.

It catalyses the reaction L-seryl-[protein] + ATP = O-phospho-L-seryl-[protein] + ADP + H(+). The enzyme catalyses L-threonyl-[protein] + ATP = O-phospho-L-threonyl-[protein] + ADP + H(+). Its function is as follows. Modulates root tip growth. May play a common role in the tip growth of plant cells. The sequence is that of Probable serine/threonine protein kinase IRE from Arabidopsis thaliana (Mouse-ear cress).